A 212-amino-acid chain; its full sequence is Ribosomal RNA large subunit methyltransferase E (212 aa).

Over residues 1–10 (MATCRRRRRG) the composition is skewed to basic residues. The interval 1 to 24 (MATCRRRRRGCNSQARRSRHESDP) is disordered. 5 residues coordinate S-adenosyl-L-methionine: Gly-66, Trp-68, Asp-86, Asp-102, and Asp-127. The active-site Proton acceptor is Lys-167.

It belongs to the class I-like SAM-binding methyltransferase superfamily. RNA methyltransferase RlmE family.

It localises to the cytoplasm. The catalysed reaction is uridine(2552) in 23S rRNA + S-adenosyl-L-methionine = 2'-O-methyluridine(2552) in 23S rRNA + S-adenosyl-L-homocysteine + H(+). In terms of biological role, specifically methylates the uridine in position 2552 of 23S rRNA at the 2'-O position of the ribose in the fully assembled 50S ribosomal subunit. The sequence is that of Ribosomal RNA large subunit methyltransferase E from Halorhodospira halophila (strain DSM 244 / SL1) (Ectothiorhodospira halophila (strain DSM 244 / SL1)).